Reading from the N-terminus, the 176-residue chain is Large ribosomal subunit protein eL6 (176 aa).

Residues 1–27 form a disordered region; it reads MSQVAPKWYQSEDVPAPKQTRKTARPQ.

Belongs to the eukaryotic ribosomal protein eL6 family. In terms of assembly, component of the large ribosomal subunit. Mature ribosomes consist of a small (40S) and a large (60S) subunit. The 40S subunit contains about 32 different proteins and 1 molecule of RNA (18S). The 60S subunit contains 45 different proteins and 3 molecules of RNA (25S, 5.8S and 5S).

It localises to the cytoplasm. Component of the ribosome, a large ribonucleoprotein complex responsible for the synthesis of proteins in the cell. The small ribosomal subunit (SSU) binds messenger RNAs (mRNAs) and translates the encoded message by selecting cognate aminoacyl-transfer RNA (tRNA) molecules. The large subunit (LSU) contains the ribosomal catalytic site termed the peptidyl transferase center (PTC), which catalyzes the formation of peptide bonds, thereby polymerizing the amino acids delivered by tRNAs into a polypeptide chain. The nascent polypeptides leave the ribosome through a tunnel in the LSU and interact with protein factors that function in enzymatic processing, targeting, and the membrane insertion of nascent chains at the exit of the ribosomal tunnel. This chain is Large ribosomal subunit protein eL6, found in Candida albicans (strain SC5314 / ATCC MYA-2876) (Yeast).